Consider the following 404-residue polypeptide: MDFTSDYAHRRMVKFLTIILIGFMTVFGLLANRYRAGRRERFRFSKANLAFASLWAIAFSLVYGRQIYKEYQEGQINLKDATTLYSYMNITVAVINYVSQMIISDHVAKVLSKVPFFDTLKEFRLDSRSLYISIVLALVKTVAFPLTIEVAFILQQRRQHPEMSLIWTLYRLFPLIISNFLNNCYFGAMVVVKEILYALNRRLEAQLQEVNLLQRKDQLKLYTKYYRMQRFCALADELDQLAYRYRLIYVHSGKYLTPMSLSMILSLICHLLGITVGFYSLYYAIADTLIMGKPYDGLGSLINLVFLSISLAEITLLTHLCNHLLVATRRSAVILQEMNLQHADSRYRQAVHGFTLLVTVTKYQIKPLGLYELDMRLISNVFSAVASFLLILVQADLSQRFKMQ.

The Cytoplasmic segment spans residues 1-11 (MDFTSDYAHRR). The chain crosses the membrane as a helical span at residues 12-32 (MVKFLTIILIGFMTVFGLLAN). At 33-43 (RYRAGRRERFR) the chain is on the extracellular side. Residues 44–64 (FSKANLAFASLWAIAFSLVYG) traverse the membrane as a helical segment. At 65 to 133 (RQIYKEYQEG…RLDSRSLYIS (69 aa)) the chain is on the cytoplasmic side. A helical transmembrane segment spans residues 134–154 (IVLALVKTVAFPLTIEVAFIL). The Extracellular segment spans residues 155 to 171 (QQRRQHPEMSLIWTLYR). Residues 172-192 (LFPLIISNFLNNCYFGAMVVV) traverse the membrane as a helical segment. At 193-260 (KEILYALNRR…HSGKYLTPMS (68 aa)) the chain is on the cytoplasmic side. The helical transmembrane segment at 261-281 (LSMILSLICHLLGITVGFYSL) threads the bilayer. The Extracellular segment spans residues 282 to 296 (YYAIADTLIMGKPYD). The helical transmembrane segment at 297–317 (GLGSLINLVFLSISLAEITLL) threads the bilayer. The Cytoplasmic segment spans residues 318-376 (THLCNHLLVATRRSAVILQEMNLQHADSRYRQAVHGFTLLVTVTKYQIKPLGLYELDMR). A helical membrane pass occupies residues 377-397 (LISNVFSAVASFLLILVQADL). Residues 398 to 404 (SQRFKMQ) are Extracellular-facing.

Belongs to the insect chemoreceptor superfamily. Gustatory receptor (GR) family. Gr22e subfamily. As to expression, in larvae, is expressed in neurons of the terminal external chemosensory organ.

The protein localises to the cell membrane. Its function is as follows. Probable gustatory receptor which mediates acceptance or avoidance behavior, depending on its substrates. In Drosophila melanogaster (Fruit fly), this protein is Putative gustatory receptor 94a (Gr94a).